The sequence spans 125 residues: Phosphoribosyl-AMP cyclohydrolase (125 aa).

Asp86 lines the Mg(2+) pocket. Cys87 contacts Zn(2+). The Mg(2+) site is built by Asp88 and Asp90. Zn(2+) contacts are provided by Cys103 and Cys110.

Belongs to the PRA-CH family. In terms of assembly, homodimer. Mg(2+) serves as cofactor. The cofactor is Zn(2+).

The protein resides in the cytoplasm. The enzyme catalyses 1-(5-phospho-beta-D-ribosyl)-5'-AMP + H2O = 1-(5-phospho-beta-D-ribosyl)-5-[(5-phospho-beta-D-ribosylamino)methylideneamino]imidazole-4-carboxamide. It participates in amino-acid biosynthesis; L-histidine biosynthesis; L-histidine from 5-phospho-alpha-D-ribose 1-diphosphate: step 3/9. Its function is as follows. Catalyzes the hydrolysis of the adenine ring of phosphoribosyl-AMP. In Erythrobacter litoralis (strain HTCC2594), this protein is Phosphoribosyl-AMP cyclohydrolase.